A 76-amino-acid polypeptide reads, in one-letter code: Small ribosomal subunit protein bS18 (76 aa).

Belongs to the bacterial ribosomal protein bS18 family. Part of the 30S ribosomal subunit. Forms a tight heterodimer with protein bS6.

In terms of biological role, binds as a heterodimer with protein bS6 to the central domain of the 16S rRNA, where it helps stabilize the platform of the 30S subunit. The polypeptide is Small ribosomal subunit protein bS18 (Desulfitobacterium hafniense (strain Y51)).